Consider the following 218-residue polypeptide: DNA-directed RNA polymerase III subunit RPC7-like (218 aa).

Positions 130–218 (TIILPKRPPK…SDDNMDEAIY (89 aa)) are disordered. The span at 139-160 (KSTDDKEETIQKLETLEKKEEE) shows a compositional bias: basic and acidic residues. 2 stretches are compositionally biased toward acidic residues: residues 161-193 (VTSE…EETD) and 201-218 (NGED…EAIY).

Belongs to the eukaryotic RPC7 RNA polymerase subunit family. In terms of assembly, component of the RNA polymerase III (Pol III) complex consisting of 17 subunits. Pol III exists as two alternative complexes defined by the mutually exclusive incorporation of subunit POLR3G/RPC7alpha or POLR3GL/RPC7beta. Found in a trimeric complex with POLR3C/RPC3 and POLR3F/RPC6. Directly interacts with POLR3C. Expressed in the liver.

It localises to the nucleus. In terms of biological role, DNA-dependent RNA polymerase catalyzes the transcription of DNA into RNA using the four ribonucleoside triphosphates as substrates. Specific peripheric component of RNA polymerase III which synthesizes small RNAs, such as 5S rRNA and tRNAs. This chain is DNA-directed RNA polymerase III subunit RPC7-like, found in Mus musculus (Mouse).